The sequence spans 315 residues: Ribosomal RNA small subunit methyltransferase H (315 aa).

Residues 37-39 (GGH), Asp-57, Phe-83, Asp-105, and Gln-112 contribute to the S-adenosyl-L-methionine site.

This sequence belongs to the methyltransferase superfamily. RsmH family.

It is found in the cytoplasm. It catalyses the reaction cytidine(1402) in 16S rRNA + S-adenosyl-L-methionine = N(4)-methylcytidine(1402) in 16S rRNA + S-adenosyl-L-homocysteine + H(+). Specifically methylates the N4 position of cytidine in position 1402 (C1402) of 16S rRNA. The polypeptide is Ribosomal RNA small subunit methyltransferase H (Pseudomonas fluorescens (strain ATCC BAA-477 / NRRL B-23932 / Pf-5)).